The chain runs to 371 residues: o-succinylbenzoate synthase (371 aa).

Lys-164 acts as the Proton donor in catalysis. 3 residues coordinate Mg(2+): Asp-189, Glu-214, and Asp-239. The Proton acceptor role is filled by Lys-263.

It belongs to the mandelate racemase/muconate lactonizing enzyme family. MenC type 2 subfamily. A divalent metal cation is required as a cofactor.

The enzyme catalyses (1R,6R)-6-hydroxy-2-succinyl-cyclohexa-2,4-diene-1-carboxylate = 2-succinylbenzoate + H2O. The protein operates within quinol/quinone metabolism; 1,4-dihydroxy-2-naphthoate biosynthesis; 1,4-dihydroxy-2-naphthoate from chorismate: step 4/7. It participates in quinol/quinone metabolism; menaquinone biosynthesis. Converts 2-succinyl-6-hydroxy-2,4-cyclohexadiene-1-carboxylate (SHCHC) to 2-succinylbenzoate (OSB). Does not show detectable N-acylamino acid racemase (NAAAR) activity with N-acetyl-S-methionine as substrate. The chain is o-succinylbenzoate synthase from Bacillus subtilis (strain 168).